Consider the following 154-residue polypeptide: Protein ripply (154 aa).

The short motif at 38 to 41 (WRPW) is the WRPW motif element. 2 disordered regions span residues 54 to 86 (IRER…FQHP) and 121 to 154 (EDPA…PILN). The interval 85–119 (HPVKLHWSKPVYDYMYQYGKQLLDAFPVQATICIV) is ripply homology domain. Residues 121-140 (EDPAQSDDSDFESDYEDDSD) show a composition bias toward acidic residues.

The protein belongs to the ripply family. In the late gastrula stage, expression appears in the dorsal presomitic mesoderm and in the first three pairs of nascent somites. Expressed strongly in forming somites and then expression is rapidly down-regulated except in the first somite pair where expression is maintained for a longer period. Also expressed in the presumptive notochord and in the tail bud at the 48 hour larval stage. Expression disappears by the 72 hour stage.

The protein resides in the nucleus. In terms of biological role, may play a role in somitogenesis. The chain is Protein ripply from Branchiostoma belcheri (Amphioxus).